The chain runs to 472 residues: GTPase Der (472 aa).

2 EngA-type G domains span residues 3–166 (AVIA…PPAE) and 178–351 (IPVA…AAAH). GTP is bound by residues 9-16 (GRPNVGKS), 56-60 (DTGGM), 118-121 (NKTD), 184-191 (GRPNVGKS), 231-235 (DTAGV), and 296-299 (NKWD). In terms of domain architecture, KH-like spans 352-436 (RDLATPELND…PVRIECRASD (85 aa)). The tract at residues 434–472 (ASDNPFADKPNQLTERQRRRRQRVIHHAKKREKKRKRRR) is disordered. The segment covering 450-472 (QRRRRQRVIHHAKKREKKRKRRR) has biased composition (basic residues).

It belongs to the TRAFAC class TrmE-Era-EngA-EngB-Septin-like GTPase superfamily. EngA (Der) GTPase family. Associates with the 50S ribosomal subunit.

Functionally, GTPase that plays an essential role in the late steps of ribosome biogenesis. The sequence is that of GTPase Der from Halorhodospira halophila (strain DSM 244 / SL1) (Ectothiorhodospira halophila (strain DSM 244 / SL1)).